The chain runs to 332 residues: ADP-L-glycero-D-manno-heptose-6-epimerase (332 aa).

Residues 10-11, 31-32, lysine 38, 74-78, and asparagine 91 each bind NADP(+); these read FI, DD, and QGACS. Residue tyrosine 138 is the Proton acceptor of the active site. Lysine 142 is a binding site for NADP(+). Residue asparagine 167 participates in substrate binding. NADP(+)-binding residues include valine 168 and lysine 176. The active-site Proton acceptor is lysine 176. Substrate contacts are provided by residues arginine 178, histidine 185, 199 to 202, arginine 212, and tyrosine 291; that span reads FSGW.

This sequence belongs to the NAD(P)-dependent epimerase/dehydratase family. HldD subfamily. In terms of assembly, homopentamer. NADP(+) is required as a cofactor.

The enzyme catalyses ADP-D-glycero-beta-D-manno-heptose = ADP-L-glycero-beta-D-manno-heptose. Its pathway is nucleotide-sugar biosynthesis; ADP-L-glycero-beta-D-manno-heptose biosynthesis; ADP-L-glycero-beta-D-manno-heptose from D-glycero-beta-D-manno-heptose 7-phosphate: step 4/4. Its function is as follows. Catalyzes the interconversion between ADP-D-glycero-beta-D-manno-heptose and ADP-L-glycero-beta-D-manno-heptose via an epimerization at carbon 6 of the heptose. This Bordetella avium (strain 197N) protein is ADP-L-glycero-D-manno-heptose-6-epimerase.